We begin with the raw amino-acid sequence, 657 residues long: Protein translocase subunit SecA 2 (657 aa).

ATP-binding positions include Q93, 111-115, and D531; that span reads GEGKT.

It belongs to the SecA family. Monomer and homodimer. Part of the essential Sec protein translocation apparatus which comprises SecA, SecYEG and auxiliary proteins SecDF. Other proteins may also be involved.

Its subcellular location is the cell inner membrane. The protein localises to the cytoplasm. It carries out the reaction ATP + H2O + cellular proteinSide 1 = ADP + phosphate + cellular proteinSide 2.. In terms of biological role, part of the Sec protein translocase complex. Interacts with the SecYEG preprotein conducting channel. Has a central role in coupling the hydrolysis of ATP to the transfer of proteins into and across the cell membrane, serving as an ATP-driven molecular motor driving the stepwise translocation of polypeptide chains across the membrane. The sequence is that of Protein translocase subunit SecA 2 from Rhodopirellula baltica (strain DSM 10527 / NCIMB 13988 / SH1).